The sequence spans 177 residues: Protein C (177 aa).

The segment covering 1–10 (MSTKAWNASR) has biased composition (polar residues). Positions 1-38 (MSTKAWNASRLSGPDPSTPWSLRKPLQHGSRPPKGKRL) are disordered.

The protein belongs to the morbillivirus protein C family.

The protein is Protein C (P/V/C) of Rinderpest virus (strain RBOK) (RDV).